We begin with the raw amino-acid sequence, 325 residues long: BES1/BZR1 homolog protein 4 (325 aa).

The tract at residues 1–21 is disordered; sequence MTSGTRMPTWRERENNKRRER. Residues 6-89 are required for DNA-binding; that stretch reads RMPTWREREN…RMEIGGGSAT (84 aa). The residue at position 169 (Thr169) is a Phosphothreonine. The disordered stretch occupies residues 304–325; the sequence is ERIHEESGSDDLELTLGNSSTR.

Belongs to the BZR/LAT61 family. Phosphorylated. Phosphorylation increases protein degradation.

This Arabidopsis thaliana (Mouse-ear cress) protein is BES1/BZR1 homolog protein 4 (BEH4).